The chain runs to 279 residues: Energy-coupling factor transporter ATP-binding protein EcfA (279 aa).

The region spanning Ile-5–Asp-240 is the ABC transporter domain. Gly-40–Ser-47 lines the ATP pocket.

This sequence belongs to the ABC transporter superfamily. Energy-coupling factor EcfA family. As to quaternary structure, forms a stable energy-coupling factor (ECF) transporter complex composed of 2 membrane-embedded substrate-binding proteins (S component), 2 ATP-binding proteins (A component) and 2 transmembrane proteins (T component).

It is found in the cell membrane. Its function is as follows. ATP-binding (A) component of a common energy-coupling factor (ECF) ABC-transporter complex. Unlike classic ABC transporters this ECF transporter provides the energy necessary to transport a number of different substrates. The chain is Energy-coupling factor transporter ATP-binding protein EcfA from Enterococcus faecium (Streptococcus faecium).